Reading from the N-terminus, the 447-residue chain is Tubulin beta-1 chain (447 aa).

Gln-11, Glu-69, Ser-138, Gly-142, Thr-143, Gly-144, Asn-204, and Asn-226 together coordinate GTP. Position 69 (Glu-69) interacts with Mg(2+). Positions 428 to 447 (ATADEDAEFDEEQEQEIEDN) are disordered. The segment covering 429-447 (TADEDAEFDEEQEQEIEDN) has biased composition (acidic residues).

This sequence belongs to the tubulin family. As to quaternary structure, dimer of alpha and beta chains. A typical microtubule is a hollow water-filled tube with an outer diameter of 25 nm and an inner diameter of 15 nM. Alpha-beta heterodimers associate head-to-tail to form protofilaments running lengthwise along the microtubule wall with the beta-tubulin subunit facing the microtubule plus end conferring a structural polarity. Microtubules usually have 13 protofilaments but different protofilament numbers can be found in some organisms and specialized cells. The cofactor is Mg(2+).

The protein resides in the cytoplasm. The protein localises to the cytoskeleton. Its function is as follows. Tubulin is the major constituent of microtubules, a cylinder consisting of laterally associated linear protofilaments composed of alpha- and beta-tubulin heterodimers. Microtubules grow by the addition of GTP-tubulin dimers to the microtubule end, where a stabilizing cap forms. Below the cap, tubulin dimers are in GDP-bound state, owing to GTPase activity of alpha-tubulin. This Manduca sexta (Tobacco hawkmoth) protein is Tubulin beta-1 chain.